A 156-amino-acid polypeptide reads, in one-letter code: Small ribosomal subunit protein uS7c (156 aa).

It belongs to the universal ribosomal protein uS7 family. Part of the 30S ribosomal subunit.

It is found in the plastid. It localises to the chloroplast. Functionally, one of the primary rRNA binding proteins, it binds directly to 16S rRNA where it nucleates assembly of the head domain of the 30S subunit. The protein is Small ribosomal subunit protein uS7c (rps7) of Mesostigma viride (Green alga).